The following is a 289-amino-acid chain: Bifunctional protein FolD 2 (289 aa).

NADP(+) contacts are provided by residues 162 to 164 (GRS), S187, and I228.

This sequence belongs to the tetrahydrofolate dehydrogenase/cyclohydrolase family. As to quaternary structure, homodimer.

The catalysed reaction is (6R)-5,10-methylene-5,6,7,8-tetrahydrofolate + NADP(+) = (6R)-5,10-methenyltetrahydrofolate + NADPH. It catalyses the reaction (6R)-5,10-methenyltetrahydrofolate + H2O = (6R)-10-formyltetrahydrofolate + H(+). Its pathway is one-carbon metabolism; tetrahydrofolate interconversion. Functionally, catalyzes the oxidation of 5,10-methylenetetrahydrofolate to 5,10-methenyltetrahydrofolate and then the hydrolysis of 5,10-methenyltetrahydrofolate to 10-formyltetrahydrofolate. In Deinococcus geothermalis (strain DSM 11300 / CIP 105573 / AG-3a), this protein is Bifunctional protein FolD 2.